The chain runs to 251 residues: Probable transcriptional regulatory protein MAB_2888c (251 aa).

The segment at 1-20 (MSGHSKWATTKHQKAVKDAR) is disordered.

This sequence belongs to the TACO1 family.

The protein resides in the cytoplasm. The polypeptide is Probable transcriptional regulatory protein MAB_2888c (Mycobacteroides abscessus (strain ATCC 19977 / DSM 44196 / CCUG 20993 / CIP 104536 / JCM 13569 / NCTC 13031 / TMC 1543 / L948) (Mycobacterium abscessus)).